The sequence spans 377 residues: Multiple sugar-binding transport ATP-binding protein MsmK (377 aa).

Positions 4-246 (LNLNHIYKKY…PANKFVAGFI (243 aa)) constitute an ABC transporter domain. 38–45 (GPSGCGKS) contributes to the ATP binding site.

The protein belongs to the ABC transporter superfamily.

The protein resides in the cell membrane. Involved in a binding protein-dependent transport system responsible for the uptake of melibiose, raffinose and isomaltotriose. Probably responsible for energy coupling to the transport system. This chain is Multiple sugar-binding transport ATP-binding protein MsmK (msmK), found in Streptococcus mutans serotype c (strain ATCC 700610 / UA159).